The sequence spans 132 residues: D-ribose pyranase (132 aa).

The active-site Proton donor is His-20. Substrate is bound by residues Asp-28, His-99, and Tyr-121–Asn-123.

This sequence belongs to the RbsD / FucU family. RbsD subfamily. Homodecamer.

Its subcellular location is the cytoplasm. It catalyses the reaction beta-D-ribopyranose = beta-D-ribofuranose. It functions in the pathway carbohydrate metabolism; D-ribose degradation; D-ribose 5-phosphate from beta-D-ribopyranose: step 1/2. In terms of biological role, catalyzes the interconversion of beta-pyran and beta-furan forms of D-ribose. The sequence is that of D-ribose pyranase from Streptococcus uberis (strain ATCC BAA-854 / 0140J).